The primary structure comprises 444 residues: UDP-N-acetylmuramoylalanine--D-glutamate ligase (444 aa).

Residue 118–124 coordinates ATP; the sequence is GTNGKTT.

The protein belongs to the MurCDEF family.

The protein localises to the cytoplasm. The catalysed reaction is UDP-N-acetyl-alpha-D-muramoyl-L-alanine + D-glutamate + ATP = UDP-N-acetyl-alpha-D-muramoyl-L-alanyl-D-glutamate + ADP + phosphate + H(+). The protein operates within cell wall biogenesis; peptidoglycan biosynthesis. Cell wall formation. Catalyzes the addition of glutamate to the nucleotide precursor UDP-N-acetylmuramoyl-L-alanine (UMA). This chain is UDP-N-acetylmuramoylalanine--D-glutamate ligase, found in Protochlamydia amoebophila (strain UWE25).